The sequence spans 140 residues: Putative ABC transporter permease protein ORF1 (140 aa).

An ABC transmembrane type-1 domain is found at 1-133 (DPNVAFYSVV…ITTAGIFAYF (133 aa)). The next 3 helical transmembrane spans lie at 9–29 (VVAV…IAAL), 65–85 (TACI…YVMT), and 115–135 (TIAS…YFVT).

The protein belongs to the binding-protein-dependent transport system permease family. MalFG subfamily.

The protein localises to the cell membrane. May play a role in sugar transport. This is Putative ABC transporter permease protein ORF1 from Caldicellulosiruptor sp. (strain Rt8B.4).